A 288-amino-acid chain; its full sequence is Glycine--tRNA ligase alpha subunit (288 aa).

It belongs to the class-II aminoacyl-tRNA synthetase family. As to quaternary structure, tetramer of two alpha and two beta subunits.

It is found in the cytoplasm. The enzyme catalyses tRNA(Gly) + glycine + ATP = glycyl-tRNA(Gly) + AMP + diphosphate. The protein is Glycine--tRNA ligase alpha subunit of Rickettsia canadensis (strain McKiel).